A 263-amino-acid chain; its full sequence is 5'-nucleotidase SurE (263 aa).

Residues Asp-10, Asp-11, Ser-41, and Asn-95 each contribute to the a divalent metal cation site.

It belongs to the SurE nucleotidase family. A divalent metal cation is required as a cofactor.

Its subcellular location is the cytoplasm. It carries out the reaction a ribonucleoside 5'-phosphate + H2O = a ribonucleoside + phosphate. Nucleotidase that shows phosphatase activity on nucleoside 5'-monophosphates. This Methanoculleus marisnigri (strain ATCC 35101 / DSM 1498 / JR1) protein is 5'-nucleotidase SurE.